Reading from the N-terminus, the 510-residue chain is NAD(P)H-quinone oxidoreductase subunit 2 A, chloroplastic (510 aa).

13 helical membrane passes run 24–44 (LLLF…GLIL), 57–77 (IPWL…ALLF), 99–119 (IFQF…VEYI), 124–144 (MAIT…MFLC), 149–169 (LITI…LSGY), 183–203 (YLLM…WLYG), 227–247 (PGIS…LSPA), 295–315 (WHLL…LIAI), 323–343 (MLAY…IVGD), 354–374 (YMLF…LFGL), 395–415 (ALSL…AGFF), 418–438 (LYLF…IGLL), and 484–504 (MIVC…IIAI).

Belongs to the complex I subunit 2 family. In terms of assembly, NDH is composed of at least 16 different subunits, 5 of which are encoded in the nucleus.

It is found in the plastid. The protein resides in the chloroplast thylakoid membrane. It carries out the reaction a plastoquinone + NADH + (n+1) H(+)(in) = a plastoquinol + NAD(+) + n H(+)(out). The catalysed reaction is a plastoquinone + NADPH + (n+1) H(+)(in) = a plastoquinol + NADP(+) + n H(+)(out). Its function is as follows. NDH shuttles electrons from NAD(P)H:plastoquinone, via FMN and iron-sulfur (Fe-S) centers, to quinones in the photosynthetic chain and possibly in a chloroplast respiratory chain. The immediate electron acceptor for the enzyme in this species is believed to be plastoquinone. Couples the redox reaction to proton translocation, and thus conserves the redox energy in a proton gradient. The protein is NAD(P)H-quinone oxidoreductase subunit 2 A, chloroplastic of Solanum tuberosum (Potato).